A 264-amino-acid polypeptide reads, in one-letter code: Hydroxyethylthiazole kinase (264 aa).

A substrate-binding site is contributed by Met-41. Positions 117 and 163 each coordinate ATP. Gly-190 provides a ligand contact to substrate.

Belongs to the Thz kinase family. Mg(2+) is required as a cofactor.

The catalysed reaction is 5-(2-hydroxyethyl)-4-methylthiazole + ATP = 4-methyl-5-(2-phosphooxyethyl)-thiazole + ADP + H(+). The protein operates within cofactor biosynthesis; thiamine diphosphate biosynthesis; 4-methyl-5-(2-phosphoethyl)-thiazole from 5-(2-hydroxyethyl)-4-methylthiazole: step 1/1. In terms of biological role, catalyzes the phosphorylation of the hydroxyl group of 4-methyl-5-beta-hydroxyethylthiazole (THZ). This chain is Hydroxyethylthiazole kinase, found in Thermoanaerobacter pseudethanolicus (strain ATCC 33223 / 39E) (Clostridium thermohydrosulfuricum).